A 127-amino-acid polypeptide reads, in one-letter code: MADITKEQVVSFIENMSVLELAELVKELEEKFGVSAAAPVAVAAAPGAAAGAAAAEEKDEFDVVLKSAGDKKINVIKVVRAATGLGLKEAKDMVDGAPQTIKEAMPKAEAEELKKQLEEAGAAVELK.

The protein belongs to the bacterial ribosomal protein bL12 family. As to quaternary structure, homodimer. Part of the ribosomal stalk of the 50S ribosomal subunit. Forms a multimeric L10(L12)X complex, where L10 forms an elongated spine to which 2 to 4 L12 dimers bind in a sequential fashion. Binds GTP-bound translation factors.

Forms part of the ribosomal stalk which helps the ribosome interact with GTP-bound translation factors. Is thus essential for accurate translation. The polypeptide is Large ribosomal subunit protein bL12 (Syntrophotalea carbinolica (strain DSM 2380 / NBRC 103641 / GraBd1) (Pelobacter carbinolicus)).